Here is a 408-residue protein sequence, read N- to C-terminus: MAQQSTKNETALLVAKSAKSALQDFNHDYSKSWTFGDKWDNSNTMFETFVNKYLFPKINETLLIDIALGNRFNWLAKEQDFIGQYSEEYVIMDTVPINMDLSKNEELMLKRNYPRMATKLYGNGIVKKQKFTLNNNDTRFNFQTLADATNYALGVYKKKISDINVLEEKEMRAMLVDYSLNQLSETNVRKATSKEDLASKVFEAILNLQNNSAKYNEVHRASGGAIGQYTTVSKLKDIVILTTDSLKSYLLDTKIANTFQIAGIDFTDHVISFDDLGGVFKVTKEFKLQNQDSIDFLRAYGDYQSQLGDTIPVGAVFTYDVSKLKEFTGNVEEIKPKSDLYAFILDINSIKYKRYTKGMLKPPFHNPEFDEVTHWIHYYSFKAISPFFNKILITDQDVNPKPEEELQE.

The protein resides in the virion. Functionally, assembles to form an icosahedral capsid. The polypeptide is Major capsid protein (Staphylococcus aureus).